Reading from the N-terminus, the 218-residue chain is N-(5'-phosphoribosyl)anthranilate isomerase (218 aa).

Belongs to the TrpF family.

It catalyses the reaction N-(5-phospho-beta-D-ribosyl)anthranilate = 1-(2-carboxyphenylamino)-1-deoxy-D-ribulose 5-phosphate. The protein operates within amino-acid biosynthesis; L-tryptophan biosynthesis; L-tryptophan from chorismate: step 3/5. In Acetivibrio thermocellus (strain ATCC 27405 / DSM 1237 / JCM 9322 / NBRC 103400 / NCIMB 10682 / NRRL B-4536 / VPI 7372) (Clostridium thermocellum), this protein is N-(5'-phosphoribosyl)anthranilate isomerase.